A 215-amino-acid chain; its full sequence is 3-dehydroquinate dehydratase (215 aa).

3-dehydroquinate contacts are provided by residues Ser-6, 31 to 33 (ELR), and Arg-64. The Proton donor/acceptor role is filled by His-111. The active-site Schiff-base intermediate with substrate is the Lys-138. Arg-174, Thr-193, and Gln-197 together coordinate 3-dehydroquinate.

Belongs to the type-I 3-dehydroquinase family. In terms of assembly, homodimer.

It carries out the reaction 3-dehydroquinate = 3-dehydroshikimate + H2O. The protein operates within metabolic intermediate biosynthesis; chorismate biosynthesis; chorismate from D-erythrose 4-phosphate and phosphoenolpyruvate: step 3/7. In terms of biological role, involved in the third step of the chorismate pathway, which leads to the biosynthesis of aromatic amino acids. Catalyzes the cis-dehydration of 3-dehydroquinate (DHQ) and introduces the first double bond of the aromatic ring to yield 3-dehydroshikimate. This chain is 3-dehydroquinate dehydratase, found in Ignicoccus hospitalis (strain KIN4/I / DSM 18386 / JCM 14125).